The primary structure comprises 311 residues: Histidine decarboxylase proenzyme (311 aa).

The substrate site is built by D64 and S82. S83 carries the post-translational modification Pyruvic acid (Ser). E198 acts as the Proton donor in catalysis.

The proenzyme is a hexamer of identical pi chains; each pi chain monomer is cleaved to form a small (or beta) chain and a large (or alpha) chain by non-hydrolytic self-catalysis. Requires pyruvate as cofactor.

It catalyses the reaction L-histidine + H(+) = histamine + CO2. The sequence is that of Histidine decarboxylase proenzyme (hdcA) from Lactobacillus sp. (strain 30a).